The chain runs to 489 residues: MMQTLLRGLCVVVLFWGYIKASADFDCRRTSQTCVTGTCDDVSGSCVCPTDAGGSPSHTNKDCGLELAKVASPATLCDPPCLNGGQCFEPTADTYMCMCSEAFYGSQCENPRKQVECSGDQITINYMPIPTFSGDIFILDNRNTPECAFTEANGMYTATFTYQQCGVITTNDQPNVGDTSYQTSAAVRFNANIERGTDMKLTAECVIDGSGQSNLNNNIGTVSVDQRSNLTEETALTQYQPVSFQLQGKNGNPMPVPVNLGDELRIYIPLADTGKYTKLKITDLTTNNGMAAPDMVTETLIFNGCLTDIGEALVTGDISSDPAIPAIIINFMAFRLRGSPQVKFEAKVKVCEAADTSCEPGSCPTPAPPAPVQPTPSENPGRKRRAASDNEVILHETLTVLDPRSNEKLRLPHNKSDKKSQQNADPQQCLQSTEIMVMVIVLIVAVVLLLVITTCLAVKFMKQRAAQVKIYNSDMPTGNNTVRIPHSAF.

Residues 1-23 (MMQTLLRGLCVVVLFWGYIKASA) form the signal peptide. The region spanning 73 to 109 (PATLCDPPCLNGGQCFEPTADTYMCMCSEAFYGSQCE) is the EGF-like domain. Disulfide bonds link Cys77-Cys87, Cys81-Cys97, and Cys99-Cys108. A ZP domain is found at 116-370 (ECSGDQITIN…GSCPTPAPPA (255 aa)). The N-linked (GlcNAc...) asparagine glycan is linked to Asn229. 2 disordered regions span residues 358–389 (CEPG…AASD) and 404–425 (RSNE…QNAD). Positions 363 to 374 (CPTPAPPAPVQP) are enriched in pro residues. The span at 404-420 (RSNEKLRLPHNKSDKKS) shows a compositional bias: basic and acidic residues. N-linked (GlcNAc...) asparagine glycans are attached at residues Asn414 and Asn479.

Component of the acid-insoluble organic matrix of calcified layers of the shell (at protein level).

The protein localises to the secreted. In Lottia gigantea (Giant owl limpet), this protein is EGF-like domain-containing protein 2.